Here is a 117-residue protein sequence, read N- to C-terminus: Photosystem II reaction center Psb28 protein (117 aa).

The protein belongs to the Psb28 family. Part of the photosystem II complex.

The protein localises to the cellular thylakoid membrane. In Prochlorococcus marinus (strain MIT 9515), this protein is Photosystem II reaction center Psb28 protein.